The following is a 441-amino-acid chain: Putative collagenous domain-containing protein R238 (441 aa).

One can recognise a Collagen-like domain in the interval 164–199; the sequence is GCKGEKGIKGELGPKGNTGQKGDIGSKGDRGDKGEP. The tract at residues 171–198 is disordered; sequence IKGELGPKGNTGQKGDIGSKGDRGDKGE. Basic and acidic residues predominate over residues 187-198; sequence IGSKGDRGDKGE.

The chain is Putative collagenous domain-containing protein R238 from Acanthamoeba polyphaga (Amoeba).